We begin with the raw amino-acid sequence, 167 residues long: NADH-quinone oxidoreductase subunit B 2 (167 aa).

4 residues coordinate [4Fe-4S] cluster: cysteine 38, cysteine 39, cysteine 104, and cysteine 133.

The protein belongs to the complex I 20 kDa subunit family. NDH-1 is composed of 14 different subunits. Subunits NuoB, C, D, E, F, and G constitute the peripheral sector of the complex. [4Fe-4S] cluster serves as cofactor.

Its subcellular location is the cell membrane. The catalysed reaction is a quinone + NADH + 5 H(+)(in) = a quinol + NAD(+) + 4 H(+)(out). NDH-1 shuttles electrons from NADH, via FMN and iron-sulfur (Fe-S) centers, to quinones in the respiratory chain. The immediate electron acceptor for the enzyme in this species is believed to be ubiquinone. Couples the redox reaction to proton translocation (for every two electrons transferred, four hydrogen ions are translocated across the cytoplasmic membrane), and thus conserves the redox energy in a proton gradient. This is NADH-quinone oxidoreductase subunit B 2 from Roseiflexus sp. (strain RS-1).